A 522-amino-acid chain; its full sequence is Target of rapamycin complex 2 subunit MAPKAP1 (522 aa).

An interaction with MAP3K2 region spans residues G2 to H184. The interaction with NBN stretch occupies residues G2–K267. A Phosphothreonine modification is found at T86. 4 positions are modified to phosphoserine: S128, S186, S315, and S356. The 129-residue stretch at Q139–K267 folds into the CRIM domain. An SIN1-type RBD region spans residues L279–R353. An SIN1-type PH domain is found at H382–E487. R393 serves as a coordination point for a 1,2-diacyl-sn-glycero-3-phospho-(1D-myo-inositol-3,4,5-trisphosphate). At T398 the chain carries Phosphothreonine. Residues K428 and K464 each coordinate a 1,2-diacyl-sn-glycero-3-phospho-(1D-myo-inositol-3,4,5-trisphosphate). The tract at residues F468–Q522 is interaction with ATF2. The residue at position 510 (S510) is a Phosphoserine.

Belongs to the SIN1 family. As to quaternary structure, component of the mechanistic target of rapamycin complex 2 (mTORC2), consisting in two heterotretramers composed of MTOR, MLST8, RICTOR and MAPKAP1/SIN1. The mTORC2 core complex associates with PRR5/PROTOR1 and/or PRR5L/PROTOR2. Contrary to mTORC1, mTORC2 does not bind to and is not sensitive to FKBP12-rapamycin. Interacts with MAP3K2. Interacts with ATF2. Interacts with MAPK8. Interacts with GTP-bound HRAS and KRAS; inhibiting their activity. Interacts with IFNAR2. Phosphorylation at Ser-128 by PKC promotes relocalization to the perinuclear region, where the mTORC2 complex specifically mediates phosphorylation of SGK1. Phosphorylated at Thr-86 by AKT1 or RPS6KB1 in the presence of growth factors; the effect of this phosphorylation is however unclear. According to two studies, phosphorylation at Thr-86 by AKT1 is part of a positive feedback loop that increases mTORC2 activation. According to another study, phosphorylation at Thr-86 and Thr-398 by RPS6KB1 promotes dissociation from the mTORC2 complex, leading to inhibit mTORC2 signaling. Present in the lumenal epithelium and glandular epithelium of endometrium (at protein level).

The protein localises to the cell membrane. It is found in the cytoplasmic vesicle. Its subcellular location is the endoplasmic reticulum membrane. It localises to the early endosome membrane. The protein resides in the late endosome membrane. The protein localises to the lysosome membrane. It is found in the golgi apparatus membrane. Its subcellular location is the mitochondrion outer membrane. It localises to the cytoplasm. The protein resides in the perinuclear region. The protein localises to the nucleus. Phosphatidylinositol 3,4,5-trisphosphate (PI(3,4,5)P3) promotes MTOR activation by relieving MAPKAP1/SIN1-mediated inhibition of MTOR that takes place in absence of PI(3,4,5)P3. Functionally, component of the mechanistic target of rapamycin complex 2 (mTORC2), which transduces signals from growth factors to pathways involved in proliferation, cytoskeletal organization, lipogenesis and anabolic output. In response to growth factors, mTORC2 phosphorylates and activates AGC protein kinase family members, including AKT (AKT1, AKT2 and AKT3), PKC (PRKCA, PRKCB and PRKCE) and SGK1. In contrast to mTORC1, mTORC2 is nutrient-insensitive. Within the mTORC2 complex, MAPKAP1/SIN1 acts as a substrate adapter which recognizes and binds AGC protein kinase family members for phosphorylation by MTOR. mTORC2 plays a critical role in AKT1 activation by mediating phosphorylation of different sites depending on the context, such as 'Thr-450', 'Ser-473', 'Ser-477' or 'Thr-479', facilitating the phosphorylation of the activation loop of AKT1 on 'Thr-308' by PDPK1/PDK1 which is a prerequisite for full activation. mTORC2 catalyzes the phosphorylation of SGK1 at 'Ser-422' and of PRKCA on 'Ser-657'. The mTORC2 complex also phosphorylates various proteins involved in insulin signaling, such as FBXW8 and IGF2BP1. mTORC2 acts upstream of Rho GTPases to regulate the actin cytoskeleton, probably by activating one or more Rho-type guanine nucleotide exchange factors. mTORC2 promotes the serum-induced formation of stress-fibers or F-actin. MAPKAP1 inhibits MAP3K2 by preventing its dimerization and autophosphorylation. Inhibits HRAS and KRAS independently of mTORC2 complex. Enhances osmotic stress-induced phosphorylation of ATF2 and ATF2-mediated transcription. Involved in ciliogenesis, regulates cilia length through its interaction with CCDC28B independently of mTORC2 complex. This Ovis aries (Sheep) protein is Target of rapamycin complex 2 subunit MAPKAP1 (MAPKAP1).